Consider the following 550-residue polypeptide: Arginine--tRNA ligase (550 aa).

The 'HIGH' region motif lies at 122 to 132; it reads GNPTGPLHLAH.

It belongs to the class-I aminoacyl-tRNA synthetase family. Monomer.

Its subcellular location is the cytoplasm. It catalyses the reaction tRNA(Arg) + L-arginine + ATP = L-arginyl-tRNA(Arg) + AMP + diphosphate. The sequence is that of Arginine--tRNA ligase from Tropheryma whipplei (strain TW08/27) (Whipple's bacillus).